Reading from the N-terminus, the 122-residue chain is Large ribosomal subunit protein uL14 (122 aa).

Belongs to the universal ribosomal protein uL14 family. Part of the 50S ribosomal subunit. Forms a cluster with proteins L3 and L19. In the 70S ribosome, L14 and L19 interact and together make contacts with the 16S rRNA in bridges B5 and B8.

Functionally, binds to 23S rRNA. Forms part of two intersubunit bridges in the 70S ribosome. The polypeptide is Large ribosomal subunit protein uL14 (Myxococcus xanthus (strain DK1622)).